The following is a 305-amino-acid chain: tRNA dimethylallyltransferase (305 aa).

9–16 lines the ATP pocket; sequence GPTASGKS. A substrate-binding site is contributed by 11–16; that stretch reads TASGKS. Positions 34-37 are interaction with substrate tRNA; that stretch reads DSKQ.

The protein belongs to the IPP transferase family. As to quaternary structure, monomer. Requires Mg(2+) as cofactor.

It catalyses the reaction adenosine(37) in tRNA + dimethylallyl diphosphate = N(6)-dimethylallyladenosine(37) in tRNA + diphosphate. Its function is as follows. Catalyzes the transfer of a dimethylallyl group onto the adenine at position 37 in tRNAs that read codons beginning with uridine, leading to the formation of N6-(dimethylallyl)adenosine (i(6)A). This Anaplasma marginale (strain St. Maries) protein is tRNA dimethylallyltransferase.